The following is a 541-amino-acid chain: Solute carrier family 2, facilitated glucose transporter member 10 (541 aa).

The Cytoplasmic segment spans residues Met-1 to Ser-15. Residues Leu-16–Leu-36 form a helical membrane-spanning segment. Residues Gln-37 to Glu-48 lie on the Extracellular side of the membrane. Residues Phe-49 to Ile-69 traverse the membrane as a helical segment. Residues Asp-70–Ala-77 lie on the Cytoplasmic side of the membrane. The chain crosses the membrane as a helical span at residues Ile-78 to Leu-98. Residues Ala-99 to Ala-106 are Extracellular-facing. Residues Val-107 to Val-127 traverse the membrane as a helical segment. The Cytoplasmic portion of the chain corresponds to Gly-128–Val-134. A helical transmembrane segment spans residues Leu-135–Tyr-155. The Extracellular portion of the chain corresponds to Ala-156–His-166. The helical transmembrane segment at Met-167–Ala-187 threads the bilayer. The Cytoplasmic portion of the chain corresponds to Gly-188–Thr-233. The helical transmembrane segment at Val-234–Ala-254 threads the bilayer. Gln-242–Gln-243 is a D-glucose binding site. The Extracellular portion of the chain corresponds to Ser-255–Ala-269. A helical transmembrane segment spans residues Val-270 to Leu-290. Residues Val-291–Ala-298 are Cytoplasmic-facing. The chain crosses the membrane as a helical span at residues Leu-299–Phe-319. At Ala-320–Leu-414 the chain is on the extracellular side. Asn-334 is a glycosylation site (N-linked (GlcNAc...) asparagine). Positions Gly-340–Arg-388 are disordered. Residues Cys-415–Leu-435 form a helical membrane-spanning segment. Position 432 (Trp-432) interacts with D-glucose. The Cytoplasmic portion of the chain corresponds to Ser-436–Gly-445. A helical membrane pass occupies residues Arg-446 to Phe-466. Residues Leu-467–Ser-476 are Extracellular-facing. The chain crosses the membrane as a helical span at residues Trp-477–Val-497. At Pro-498–Ser-541 the chain is on the cytoplasmic side.

Belongs to the major facilitator superfamily. Sugar transporter (TC 2.A.1.1) family. Glucose transporter subfamily. Widely expressed; highest levels in liver and pancreas.

It is found in the endomembrane system. The protein localises to the cytoplasm. Its subcellular location is the perinuclear region. The catalysed reaction is D-glucose(out) = D-glucose(in). Functionally, facilitative glucose transporter required for the development of the cardiovascular system. This Homo sapiens (Human) protein is Solute carrier family 2, facilitated glucose transporter member 10.